Consider the following 187-residue polypeptide: UPF0302 protein SERP1032 (187 aa).

It belongs to the UPF0302 family.

This Staphylococcus epidermidis (strain ATCC 35984 / DSM 28319 / BCRC 17069 / CCUG 31568 / BM 3577 / RP62A) protein is UPF0302 protein SERP1032.